Reading from the N-terminus, the 271-residue chain is 3-methyl-2-oxobutanoate hydroxymethyltransferase (271 aa).

Residues Asp53 and Asp92 each coordinate Mg(2+). Residues Asp53–Ser54, Asp92, and Lys120 each bind 3-methyl-2-oxobutanoate. Residue Glu122 participates in Mg(2+) binding. The active-site Proton acceptor is the Glu189.

The protein belongs to the PanB family. Homodecamer; pentamer of dimers. Requires Mg(2+) as cofactor.

The protein localises to the cytoplasm. It carries out the reaction 3-methyl-2-oxobutanoate + (6R)-5,10-methylene-5,6,7,8-tetrahydrofolate + H2O = 2-dehydropantoate + (6S)-5,6,7,8-tetrahydrofolate. It functions in the pathway cofactor biosynthesis; (R)-pantothenate biosynthesis; (R)-pantoate from 3-methyl-2-oxobutanoate: step 1/2. Functionally, catalyzes the reversible reaction in which hydroxymethyl group from 5,10-methylenetetrahydrofolate is transferred onto alpha-ketoisovalerate to form ketopantoate. In Burkholderia thailandensis (strain ATCC 700388 / DSM 13276 / CCUG 48851 / CIP 106301 / E264), this protein is 3-methyl-2-oxobutanoate hydroxymethyltransferase.